A 94-amino-acid polypeptide reads, in one-letter code: Bacterial microcompartment shell protein PduA (94 aa).

The region spanning 5-89 (ALGMVETKGL…PHTDVEKILP (85 aa)) is the BMC domain.

The protein belongs to the bacterial microcompartments protein family. As to quaternary structure, homohexamer with a central pore of about 5.6 Angstroms in diameter. The hexamers pack against each other in arrays. Interacts with the N-terminus of PduP which targets PduP to the BMC. Modeling suggests PduC, PduD, PduE, PduL and PduP interact with a cleft formed by the C-terminal segments of 2 adjacent PduA subunits (on the BMC luminal side) in the hexamer.

Its subcellular location is the bacterial microcompartment. It participates in polyol metabolism; 1,2-propanediol degradation. Functionally, one of the major shell proteins of the bacterial microcompartment (BMC) dedicated to 1,2-propanediol (1,2-PD) degradation. At least one of PduA or PduJ is required for BMC assembly; it must be encoded as the first gene in the pdu operon. Not required for structural integrity of BMCs, it is required to mitigate propionaldehyde toxicity. Controls diffusion of 1,2-PD into and propionaldehyde out of the BMC shell; residue 40 is particularly important for pore permeability. Overexpression of this protein leads to aberrant filaments that extend the length of the cell, cross the cleavage furrow and impair division. The filaments form nanotubes with a hollow center. The isolated BMC shell component protein ratio for J:A:B':B:K:T:U is approximately 15:10:7:6:1:1:2. Edge residues (particularly Lys-26) are important for function and assembly of the BMC, and influence array formation by hexamers. Interaction with PduA allows encapsulation of at least PduP in BMCs. Probably also targets PduD to the BMC. PduA is probably the hub for binding multiple enzymes to the interior of the BMC; modeling suggests PduC, PduD, PduE, PduG, PduL and PduP are targeted to PduA. In terms of biological role, the 1,2-PD-specific bacterial microcompartment (BMC) concentrates low levels of 1,2-PD catabolic enzymes, concentrates volatile reaction intermediates thus enhancing pathway flux and keeps the level of toxic, mutagenic propionaldehyde low. The protein is Bacterial microcompartment shell protein PduA of Salmonella typhimurium (strain LT2 / SGSC1412 / ATCC 700720).